An 83-amino-acid polypeptide reads, in one-letter code: EMBRYO SURROUNDING FACTOR 1.1 (83 aa).

A signal peptide spans 1 to 22; it reads MKSSHTSLICILMLSLVALHQC. 4 cysteine pairs are disulfide-bonded: C41–C56, C46–C75, C54–C71, and C57–C64.

It belongs to the MEG family. In terms of tissue distribution, expressed exclusively in ovule embryo sacs and in early developing endosperms.

Its function is as follows. Maternally-contributed central cell peptide regulating suspensor development and correct auxin distribution in early developing embryos. The chain is EMBRYO SURROUNDING FACTOR 1.1 (ESF1.1) from Arabidopsis thaliana (Mouse-ear cress).